Consider the following 288-residue polypeptide: Small ribosomal subunit protein uS3 (288 aa).

The KH type-2 domain occupies 39-107 (VREYLKAKLK…PVAVNIEEVR (69 aa)). The tract at residues 209-288 (GRNDLPAAET…AAAAADGKGE (80 aa)) is disordered. The segment covering 219 to 238 (PRPEEERRPRGPRRDGRPGD) has biased composition (basic and acidic residues). Over residues 277–288 (APAAAAADGKGE) the composition is skewed to low complexity.

The protein belongs to the universal ribosomal protein uS3 family. Part of the 30S ribosomal subunit. Forms a tight complex with proteins S10 and S14.

Its function is as follows. Binds the lower part of the 30S subunit head. Binds mRNA in the 70S ribosome, positioning it for translation. The sequence is that of Small ribosomal subunit protein uS3 from Acidovorax sp. (strain JS42).